Consider the following 159-residue polypeptide: SsrA-binding protein (159 aa).

The tract at residues 137–159 (KRQTEKERDWEREKQRLFQRDQR) is disordered.

Belongs to the SmpB family.

The protein localises to the cytoplasm. Required for rescue of stalled ribosomes mediated by trans-translation. Binds to transfer-messenger RNA (tmRNA), required for stable association of tmRNA with ribosomes. tmRNA and SmpB together mimic tRNA shape, replacing the anticodon stem-loop with SmpB. tmRNA is encoded by the ssrA gene; the 2 termini fold to resemble tRNA(Ala) and it encodes a 'tag peptide', a short internal open reading frame. During trans-translation Ala-aminoacylated tmRNA acts like a tRNA, entering the A-site of stalled ribosomes, displacing the stalled mRNA. The ribosome then switches to translate the ORF on the tmRNA; the nascent peptide is terminated with the 'tag peptide' encoded by the tmRNA and targeted for degradation. The ribosome is freed to recommence translation, which seems to be the essential function of trans-translation. The protein is SsrA-binding protein of Cellvibrio japonicus (strain Ueda107) (Pseudomonas fluorescens subsp. cellulosa).